The following is a 234-amino-acid chain: Phosphoglycolate phosphatase (234 aa).

The active-site Nucleophile is the aspartate 8. Positions 8 and 10 each coordinate Mg(2+). Lysine 157 provides a ligand contact to substrate. Mg(2+) is bound by residues aspartate 180 and aspartate 184.

It belongs to the archaeal SPP-like hydrolase family. The cofactor is Mg(2+).

It carries out the reaction 2-phosphoglycolate + H2O = glycolate + phosphate. Its function is as follows. Catalyzes the dephosphorylation of 2-phosphoglycolate. This chain is Phosphoglycolate phosphatase, found in Methanoculleus marisnigri (strain ATCC 35101 / DSM 1498 / JR1).